The primary structure comprises 123 residues: Beta-2-microglobulin (123 aa).

An N-terminal signal peptide occupies residues 1-21 (MSRLFLFALLGHLCFLPYLDA). Residues 29–118 (PRVQVYSRYP…STLNEPKVVK (90 aa)) enclose the Ig-like C1-type domain. Cys-49 and Cys-104 are oxidised to a cystine.

It belongs to the beta-2-microglobulin family. As to quaternary structure, heterodimer of an alpha chain and a beta chain. Beta-2-microglobulin is the beta-chain of major histocompatibility complex class I molecules.

It localises to the secreted. Component of the class I major histocompatibility complex (MHC). Involved in the presentation of peptide antigens to the immune system. This is Beta-2-microglobulin (B2M) from Monodelphis domestica (Gray short-tailed opossum).